The chain runs to 205 residues: Translation initiation factor 2 subunit beta (205 aa).

A TRAM domain is found at 145-203; it reads GIEIGKEYTVTIESTGSAGEGIARYQGYTIYVPKAKKGERVKIIIRKIKRNVAIAELAD.

It belongs to the eIF-2-beta/eIF-5 family. Heterotrimer composed of an alpha, a beta and a gamma chain.

In terms of biological role, eIF-2 functions in the early steps of protein synthesis by forming a ternary complex with GTP and initiator tRNA. In Picrophilus torridus (strain ATCC 700027 / DSM 9790 / JCM 10055 / NBRC 100828 / KAW 2/3), this protein is Translation initiation factor 2 subunit beta.